An 85-amino-acid polypeptide reads, in one-letter code: Large ribosomal subunit protein bL27 (85 aa).

A disordered region spans residues 1–20; the sequence is MATKKAGGSTRNGRDSEAKR.

The protein belongs to the bacterial ribosomal protein bL27 family.

The chain is Large ribosomal subunit protein bL27 from Glaesserella parasuis serovar 5 (strain SH0165) (Haemophilus parasuis).